The following is a 381-amino-acid chain: N-acetyldiaminopimelate deacetylase (381 aa).

The active site involves Asp-71. Residue Glu-130 is the Proton acceptor of the active site.

Belongs to the peptidase M20A family. N-acetyldiaminopimelate deacetylase subfamily.

It catalyses the reaction N-acetyl-(2S,6S)-2,6-diaminopimelate + H2O = (2S,6S)-2,6-diaminopimelate + acetate. The protein operates within amino-acid biosynthesis; L-lysine biosynthesis via DAP pathway; LL-2,6-diaminopimelate from (S)-tetrahydrodipicolinate (acetylase route): step 3/3. Its function is as follows. Catalyzes the conversion of N-acetyl-diaminopimelate to diaminopimelate and acetate. The polypeptide is N-acetyldiaminopimelate deacetylase (Ligilactobacillus salivarius (strain UCC118) (Lactobacillus salivarius)).